We begin with the raw amino-acid sequence, 477 residues long: Ribosomal RNA small subunit methyltransferase F (477 aa).

Residues 125-131 (AAAPGSK), Glu-149, Asp-176, and Asp-194 each bind S-adenosyl-L-methionine. Cys-247 functions as the Nucleophile in the catalytic mechanism.

Belongs to the class I-like SAM-binding methyltransferase superfamily. RsmB/NOP family.

Its subcellular location is the cytoplasm. It catalyses the reaction cytidine(1407) in 16S rRNA + S-adenosyl-L-methionine = 5-methylcytidine(1407) in 16S rRNA + S-adenosyl-L-homocysteine + H(+). Its function is as follows. Specifically methylates the cytosine at position 1407 (m5C1407) of 16S rRNA. The polypeptide is Ribosomal RNA small subunit methyltransferase F (Klebsiella pneumoniae (strain 342)).